Here is a 790-residue protein sequence, read N- to C-terminus: Phenylalanine--tRNA ligase beta subunit (790 aa).

Positions 39–154 (PDSLNTVVTG…ENTPLGESAC (116 aa)) constitute a tRNA-binding domain. The 80-residue stretch at 404–483 (SDPLSLNIRP…FVQKTQKILP (80 aa)) folds into the B5 domain. Asp457, Asp463, Glu466, and Glu467 together coordinate Mg(2+). In terms of domain architecture, FDX-ACB spans 694 to 790 (PIYPSSSRDI…NLANIGKGNS (97 aa)).

This sequence belongs to the phenylalanyl-tRNA synthetase beta subunit family. Type 1 subfamily. In terms of assembly, tetramer of two alpha and two beta subunits. Mg(2+) serves as cofactor.

The protein resides in the cytoplasm. The catalysed reaction is tRNA(Phe) + L-phenylalanine + ATP = L-phenylalanyl-tRNA(Phe) + AMP + diphosphate + H(+). The polypeptide is Phenylalanine--tRNA ligase beta subunit (pheT) (Chlamydia muridarum (strain MoPn / Nigg)).